The chain runs to 443 residues: tRNA-2-methylthio-N(6)-dimethylallyladenosine synthase (443 aa).

An MTTase N-terminal domain is found at 3–120 (SKLYIRTFGC…LPDLIDARRR (118 aa)). Residues C12, C49, C83, C157, C161, and C164 each contribute to the [4Fe-4S] cluster site. In terms of domain architecture, Radical SAM core spans 143–375 (RTEGSTAFVS…QEKIQLNAQA (233 aa)). The TRAM domain occupies 378–441 (QGMVDTVQRI…SHTLRGEISD (64 aa)).

Belongs to the methylthiotransferase family. MiaB subfamily. As to quaternary structure, monomer. Requires [4Fe-4S] cluster as cofactor.

The protein localises to the cytoplasm. It carries out the reaction N(6)-dimethylallyladenosine(37) in tRNA + (sulfur carrier)-SH + AH2 + 2 S-adenosyl-L-methionine = 2-methylsulfanyl-N(6)-dimethylallyladenosine(37) in tRNA + (sulfur carrier)-H + 5'-deoxyadenosine + L-methionine + A + S-adenosyl-L-homocysteine + 2 H(+). Catalyzes the methylthiolation of N6-(dimethylallyl)adenosine (i(6)A), leading to the formation of 2-methylthio-N6-(dimethylallyl)adenosine (ms(2)i(6)A) at position 37 in tRNAs that read codons beginning with uridine. The polypeptide is tRNA-2-methylthio-N(6)-dimethylallyladenosine synthase (Nitrosomonas europaea (strain ATCC 19718 / CIP 103999 / KCTC 2705 / NBRC 14298)).